Reading from the N-terminus, the 598-residue chain is uncharacterized protein (598 aa).

Residues 1–23 are compositionally biased toward basic and acidic residues; that stretch reads MSHEGSRQARDRGVTRSKAEKAR. Disordered stretches follow at residues 1–32, 151–190, and 222–241; these read MSHE…VPQV, FHNE…VTPR, and PSKE…SPQS. Residues 225 to 235 show a composition bias toward basic and acidic residues; sequence ESLRSTAEGER. Ser-238 and Ser-242 each carry phosphoserine. Disordered stretches follow at residues 366–396 and 551–571; these read RRSQ…SSPR and AEEG…VSKP. Polar residues-rich tracts occupy residues 369–386 and 558–569; these read QAGT…SSRA and APEQQPIQTGVS.

This is an uncharacterized protein from Mus musculus (Mouse).